Reading from the N-terminus, the 136-residue chain is uncharacterized protein (136 aa).

A helical membrane pass occupies residues 7 to 27 (ANVLAILLVSLFLINGLVFLS).

It is found in the membrane. This is an uncharacterized protein from Mycoplasma pneumoniae (strain ATCC 29342 / M129 / Subtype 1) (Mycoplasmoides pneumoniae).